A 328-amino-acid chain; its full sequence is MQNQLNTLLQSAKKSVADAQSEIVLEEIRVDYLGKKGKLTELLKSVGQMPADQRPLLGKAVNEIKREIQQLLNAKSTQLREKSLQEKLNKEKVDITLRGRYDHLGAIHPISRVSERVSQLFSMLGFQIAEGPEIENEYYNFEALNIPADHPARTMADTFYFSGDKLLRTHTSPVQIREMEKQGVPIRLIALGRVYRRDLDQTHTPMFHQVEGLVIDKRSTFANLKGLLQQFLNCFFEKDVRLRFRPSYFPFTEPSAEVDIYQPRTDKWLEVLGCGMVHPNVLRNLNIDPDEYSGFAFGIGLDRLAMLRYEVTDLRLFFENDLRFLGQF.

E253 contacts Mg(2+).

It belongs to the class-II aminoacyl-tRNA synthetase family. Phe-tRNA synthetase alpha subunit type 1 subfamily. As to quaternary structure, tetramer of two alpha and two beta subunits. Mg(2+) serves as cofactor.

Its subcellular location is the cytoplasm. It carries out the reaction tRNA(Phe) + L-phenylalanine + ATP = L-phenylalanyl-tRNA(Phe) + AMP + diphosphate + H(+). This chain is Phenylalanine--tRNA ligase alpha subunit, found in Coxiella burnetii (strain CbuG_Q212) (Coxiella burnetii (strain Q212)).